The primary structure comprises 403 residues: Exodeoxyribonuclease 7 large subunit (403 aa).

This sequence belongs to the XseA family. Heterooligomer composed of large and small subunits.

It is found in the cytoplasm. The catalysed reaction is Exonucleolytic cleavage in either 5'- to 3'- or 3'- to 5'-direction to yield nucleoside 5'-phosphates.. Bidirectionally degrades single-stranded DNA into large acid-insoluble oligonucleotides, which are then degraded further into small acid-soluble oligonucleotides. The sequence is that of Exodeoxyribonuclease 7 large subunit from Streptomyces griseus subsp. griseus (strain JCM 4626 / CBS 651.72 / NBRC 13350 / KCC S-0626 / ISP 5235).